Consider the following 488-residue polypeptide: Facilitated trehalose transporter Tret1-2 homolog (488 aa).

The Cytoplasmic portion of the chain corresponds to 1–28 (MKILMRADTHVSYSVPAEGPKANFTFSQ). A helical membrane pass occupies residues 29–49 (VLAALSVSLCSLVVGFVSAYT). At 50–72 (SPALVSMTDRTITSFEVTKDAGS) the chain is on the extracellular side. A helical membrane pass occupies residues 73–93 (WVGGIMPLAALAGGITGGPLI). The Cytoplasmic segment spans residues 94–105 (EYLGRRTTILAT). The chain crosses the membrane as a helical span at residues 106-126 (AVPFIVSSLLIACAVNVIMIL). The Extracellular portion of the chain corresponds to 127-129 (CGR). A helical membrane pass occupies residues 130 to 150 (FLTGFCVGIASLSLPVYLGET). Residues 151 to 160 (LQPEVRGTLG) are Cytoplasmic-facing. A helical membrane pass occupies residues 161–181 (LLPTALGNIGILVCYVAGSFM). N-linked (GlcNAc...) asparagine glycosylation occurs at N182. The Extracellular segment spans residues 182-184 (NWS). Residues 185 to 205 (MLAFLGAALPVPFLILMIIIP) traverse the membrane as a helical segment. Over 206–268 (ETPRWFVNRG…ELFKRINLKP (63 aa)) the chain is Cytoplasmic. A helical membrane pass occupies residues 269-289 (LSISLGLMFFQQFSGINAVIF). Over 290–305 (YTVQIFKDAGSTIDSN) the chain is Extracellular. A helical transmembrane segment spans residues 306–326 (LCTIIVGIVNFFATFMGILLI). Residues 327-332 (DRLGRK) are Cytoplasmic-facing. Residues 333–353 (ILLYISDIAMILTLSILGGFF) form a helical membrane-spanning segment. The Extracellular portion of the chain corresponds to 354–372 (YCKAHGPDVSHLGWLPLTC). The helical transmembrane segment at 373–393 (FVIYILGFSLGFGPIPWLMMG) threads the bilayer. Topologically, residues 394 to 402 (EILPAKIRG) are cytoplasmic. A helical membrane pass occupies residues 403–423 (PAASVVTAFNWFCTFVVTKTF). At 424-433 (QDLTVAMGAH) the chain is on the extracellular side. A helical transmembrane segment spans residues 434-454 (GAFWLFGVVCIVGLFFVIICV). The Cytoplasmic portion of the chain corresponds to 455-488 (PETRGKSLEEIERKMMGRVPISAVVNIKPFSFNM).

Belongs to the major facilitator superfamily. Sugar transporter (TC 2.A.1.1) family. Trehalose transporter subfamily.

It localises to the cell membrane. In terms of biological role, fails to transport trehalose. This Drosophila simulans (Fruit fly) protein is Facilitated trehalose transporter Tret1-2 homolog.